Reading from the N-terminus, the 340-residue chain is Ribose-phosphate pyrophosphokinase (340 aa).

Residues Asn-47–Glu-49 and Arg-106–Gln-107 each bind ATP. Residues His-140 and Asp-182 each coordinate Mg(2+). Lys-206 is an active-site residue. D-ribose 5-phosphate contacts are provided by residues Arg-208, Asp-234, and Asp-238–Thr-242.

It belongs to the ribose-phosphate pyrophosphokinase family. Class I subfamily. As to quaternary structure, homohexamer. Mg(2+) is required as a cofactor.

It localises to the cytoplasm. The catalysed reaction is D-ribose 5-phosphate + ATP = 5-phospho-alpha-D-ribose 1-diphosphate + AMP + H(+). It participates in metabolic intermediate biosynthesis; 5-phospho-alpha-D-ribose 1-diphosphate biosynthesis; 5-phospho-alpha-D-ribose 1-diphosphate from D-ribose 5-phosphate (route I): step 1/1. Functionally, involved in the biosynthesis of the central metabolite phospho-alpha-D-ribosyl-1-pyrophosphate (PRPP) via the transfer of pyrophosphoryl group from ATP to 1-hydroxyl of ribose-5-phosphate (Rib-5-P). The polypeptide is Ribose-phosphate pyrophosphokinase (Bifidobacterium longum (strain NCC 2705)).